We begin with the raw amino-acid sequence, 605 residues long: Aspartate--tRNA(Asp/Asn) ligase (605 aa).

Residue Glu-176 coordinates L-aspartate. An aspartate region spans residues Gln-200–Lys-203. Residues Arg-222 and His-452 each coordinate L-aspartate. Position 222–224 (Arg-222–Glu-224) interacts with ATP. Glu-490 is an ATP binding site. Arg-497 is a binding site for L-aspartate. Residue Gly-542–Arg-545 coordinates ATP.

This sequence belongs to the class-II aminoacyl-tRNA synthetase family. Type 1 subfamily. Homodimer.

The protein localises to the cytoplasm. It catalyses the reaction tRNA(Asx) + L-aspartate + ATP = L-aspartyl-tRNA(Asx) + AMP + diphosphate. In terms of biological role, aspartyl-tRNA synthetase with relaxed tRNA specificity since it is able to aspartylate not only its cognate tRNA(Asp) but also tRNA(Asn). Reaction proceeds in two steps: L-aspartate is first activated by ATP to form Asp-AMP and then transferred to the acceptor end of tRNA(Asp/Asn). In Rickettsia prowazekii (strain Madrid E), this protein is Aspartate--tRNA(Asp/Asn) ligase.